Consider the following 166-residue polypeptide: Lipoprotein signal peptidase (166 aa).

The next 3 membrane-spanning stretches (helical) occupy residues 12 to 32, 70 to 90, and 102 to 122; these read WLWL…LILQ, WFFA…MYRA, and ALII…GFVV. Catalysis depends on residues Asp-123 and Asp-141. Residues 142 to 162 traverse the membrane as a helical segment; the sequence is SAICFGAAMIVLEGFLPNAAA.

The protein belongs to the peptidase A8 family.

Its subcellular location is the cell inner membrane. The catalysed reaction is Release of signal peptides from bacterial membrane prolipoproteins. Hydrolyzes -Xaa-Yaa-Zaa-|-(S,diacylglyceryl)Cys-, in which Xaa is hydrophobic (preferably Leu), and Yaa (Ala or Ser) and Zaa (Gly or Ala) have small, neutral side chains.. The protein operates within protein modification; lipoprotein biosynthesis (signal peptide cleavage). Functionally, this protein specifically catalyzes the removal of signal peptides from prolipoproteins. The protein is Lipoprotein signal peptidase of Enterobacter sp. (strain 638).